We begin with the raw amino-acid sequence, 471 residues long: MSSFVVPSLTAVRPRDHHDYADRIALSAATTDGVQMRTEDVRAWIAERRDANVFHVERIPFADLDQWWFEGVTGNLVHRSGRFFTIEGLHVIEHDGPHGDGPYREWQQPVIRQPEVGILGILAKEFDGVLHFLMQAKMEPGNPNLVQLSPTVQATRSNYTKAHGGTNVKLIEYFAPPDPERVIVDVLQAEQGSWFFRKSNRNMIVETVDDVPLWDDFCWLTLGQIAELMHEDETINMNSRSVLSCLPYQDITPRALFSDVQLLSWFTNERSRHDVRVRRIPLADVCGWKQGAEEIEHEDGRYFKVLAVAVKGSNREKISWTQPLVESVDLGVVAFLVRKIDGVPHVLVQARVDGGFLDTVELAPTVQCTPLNYAHLPAEERPPFLDLVQNAPRSRIRYEAIHSEEGGRFLGVRARYLVIDADEAIDPPPGYAWVTPAQLTALTRHGHYVNVEARTLLACINAAAAQPRGGA.

DTDP-4-dehydro-6-deoxy-alpha-D-glucose-binding positions include W67, 155 to 159 (TRSNY), S193, N238, W288, R351, 367 to 369 (QCT), 372 to 373 (NY), and 405 to 408 (EGGR).

This sequence belongs to the hexose 2,3-dehydratase family. As to quaternary structure, homodimer.

It carries out the reaction dTDP-4-dehydro-6-deoxy-alpha-D-glucose = dTDP-3,4-didehydro-2,6-dideoxy-alpha-D-glucose + H2O. The protein operates within antibiotic biosynthesis. In terms of biological role, involved in the biosynthesis of the 2,3,6-trideoxysugar L-epivancosamine, the terminal sugar added to the aglycone scaffold of chloroeremomycin, a member of the glycopeptide antibiotics vancomycin family. Catalyzes the removal of the hydroxyl group at position C-2 of the hexose ring of dTDP-4-dehydro-6-deoxy-alpha-D-glucopyranose, and the oxidation of the hydroxyl group at position C-3 to form a carbonyl functionality. The product of the reaction, dTDP-2,6-dideoxy-D-glycero-hex-2-enos-4-ulose, is a highly unstable diketosugar, which spontaneously forms dTDP-3,4-didehydro-2,6-dideoxy-alpha-D-glucose. The protein is dTDP-4-dehydro-6-deoxy-alpha-D-glucopyranose 2,3-dehydratase of Amycolatopsis orientalis (Nocardia orientalis).